Here is a 247-residue protein sequence, read N- to C-terminus: Serine protease 1 (247 aa).

The first 15 residues, 1 to 15 (MNPLLILTFVAAALA), serve as a signal peptide directing secretion. A propeptide spans 16–23 (APFDDDDK) (activation peptide). Residues 24–244 (IVGGYNCEEN…YVKWIKNTIA (221 aa)) form the Peptidase S1 domain. 5 disulfides stabilise this stretch: cysteine 30–cysteine 160, cysteine 48–cysteine 64, cysteine 139–cysteine 206, cysteine 171–cysteine 185, and cysteine 196–cysteine 220. The active-site Charge relay system is the histidine 63. Positions 75, 77, 80, and 85 each coordinate Ca(2+). Aspartate 107 (charge relay system) is an active-site residue. A Sulfotyrosine modification is found at tyrosine 154. Serine 200 (charge relay system) is an active-site residue.

Belongs to the peptidase S1 family. Interacts with SERPINA1. It depends on Ca(2+) as a cofactor. In terms of processing, occurs in a single-chain form and a two-chain form, produced by proteolytic cleavage after Arg-122. Sulfation at Tyr-154 increases selectivity towards basic versus apolar residues at the P2' position of inhibitors that bind in a substrate-like fashion. Although the increase in selectivity is relatively small, it may facilitate digestion of a broader range of dietary proteins.

The protein resides in the secreted. The protein localises to the extracellular space. It carries out the reaction Preferential cleavage: Arg-|-Xaa, Lys-|-Xaa.. Functionally, has activity against the synthetic substrates Boc-Phe-Ser-Arg-Mec, Boc-Leu-Thr-Arg-Mec, Boc-Gln-Ala-Arg-Mec and Boc-Val-Pro-Arg-Mec. The single-chain form is more active than the two-chain form against all of these substrates. In Homo sapiens (Human), this protein is Serine protease 1.